We begin with the raw amino-acid sequence, 379 residues long: MKILRKNHPLLKIINHSFIDLPTPSNISSWWNFGSLLGMCLMIQILTGLFLAMHYTSDTTTAFSSVAHICRDVNYGWLIRYLHANGASMFFICLFIHVGRGIYYGSYVLSETWNIGIILFLTTMATAFVGYVLPWGQMSFWGATVITNLLSAIPYIGSTLVEWIWGGFSVDKATLTRFFAFHFILPFIITAFVLVHLLFLHETGSNNPSGLNSNSDKIPFHPYYTIKDLLGILFLLTALMILALFFPDILGDPDNYTPANPLNTPAHIKPEWYFLFAYAILRSIPNKLGGVLALLLSILILMAFPLLNTSKQHGLIFRPITQTIYWILIANLLVLTWIGGQPVEYPFTMIGQIASITYFAIILILXPVSNTIENNIIKL.

4 consecutive transmembrane segments (helical) span residues 33-53 (FGSLLGMCLMIQILTGLFLAM), 77-98 (WLIRYLHANGASMFFICLFIHV), 113-133 (WNIGIILFLTTMATAFVGYVL), and 178-198 (FFAFHFILPFIITAFVLVHLL). 2 residues coordinate heme b: H83 and H97. Residues H182 and H196 each contribute to the heme b site. Position 201 (H201) interacts with a ubiquinone. 4 consecutive transmembrane segments (helical) span residues 226–246 (IKDLLGILFLLTALMILALFF), 288–308 (LGGVLALLLSILILMAFPLLN), 320–340 (ITQTIYWILIANLLVLTWIGG), and 347–367 (FTMIGQIASITYFAIILILXP).

It belongs to the cytochrome b family. As to quaternary structure, the cytochrome bc1 complex contains 11 subunits: 3 respiratory subunits (MT-CYB, CYC1 and UQCRFS1), 2 core proteins (UQCRC1 and UQCRC2) and 6 low-molecular weight proteins (UQCRH/QCR6, UQCRB/QCR7, UQCRQ/QCR8, UQCR10/QCR9, UQCR11/QCR10 and a cleavage product of UQCRFS1). This cytochrome bc1 complex then forms a dimer. Heme b is required as a cofactor.

The protein localises to the mitochondrion inner membrane. Its function is as follows. Component of the ubiquinol-cytochrome c reductase complex (complex III or cytochrome b-c1 complex) that is part of the mitochondrial respiratory chain. The b-c1 complex mediates electron transfer from ubiquinol to cytochrome c. Contributes to the generation of a proton gradient across the mitochondrial membrane that is then used for ATP synthesis. This chain is Cytochrome b (MT-CYB), found in Akodon toba (Chaco grass mouse).